The chain runs to 460 residues: 1-aminocyclopropane-1-carboxylate synthase 11 (460 aa).

Residues Glu-45 and Tyr-83 each coordinate substrate. Lys-267 carries the post-translational modification N6-(pyridoxal phosphate)lysine.

Belongs to the class-I pyridoxal-phosphate-dependent aminotransferase family. In terms of assembly, homodimer and heterodimer. In vivo, the relevance of heterodimerization with other ACS enzymes is however unsure. Interacts with GRF3. Requires pyridoxal 5'-phosphate as cofactor. May be processed at its C-terminus. Expressed in roots.

It catalyses the reaction S-adenosyl-L-methionine = 1-aminocyclopropane-1-carboxylate + S-methyl-5'-thioadenosine + H(+). It functions in the pathway alkene biosynthesis; ethylene biosynthesis via S-adenosyl-L-methionine; ethylene from S-adenosyl-L-methionine: step 1/2. Functionally, 1-aminocyclopropane-1-carboxylate synthase (ACS) enzymes catalyze the conversion of S-adenosyl-L-methionine (SAM) into 1-aminocyclopropane-1-carboxylate (ACC), a direct precursor of ethylene. The polypeptide is 1-aminocyclopropane-1-carboxylate synthase 11 (ACS11) (Arabidopsis thaliana (Mouse-ear cress)).